The following is a 301-amino-acid chain: 2-dehydropantoate 2-reductase (301 aa).

NADP(+)-binding positions include 7 to 12, K74, N99, and A123; that span reads GAGAIG. K179 serves as the catalytic Proton donor. Substrate-binding positions include K179, N183, N187, N197, and 246 to 249; that span reads NYNS. An NADP(+)-binding site is contributed by E261.

Belongs to the ketopantoate reductase family.

It localises to the cytoplasm. The enzyme catalyses (R)-pantoate + NAD(+) = 2-dehydropantoate + NADH + H(+). It carries out the reaction (R)-pantoate + NADP(+) = 2-dehydropantoate + NADPH + H(+). The protein operates within cofactor biosynthesis; coenzyme A biosynthesis. Its function is as follows. Catalyzes the NAD(P)H-dependent reduction of ketopantoate into pantoic acid. This Pyrococcus horikoshii (strain ATCC 700860 / DSM 12428 / JCM 9974 / NBRC 100139 / OT-3) protein is 2-dehydropantoate 2-reductase.